Here is a 433-residue protein sequence, read N- to C-terminus: GTPase Obg (433 aa).

The Obg domain maps to 1–159; it reads MKFVDSADLI…FEIRAELKVL (159 aa). Positions 160-332 constitute an OBG-type G domain; the sequence is ADVGFVGLPN…LLFMIYEELK (173 aa). Residues 166 to 173, 191 to 195, 213 to 216, 284 to 287, and 313 to 315 each bind GTP; these read GLPNAGKS, FTTIT, DLPG, NKMD, and SGL. Ser-173 and Thr-193 together coordinate Mg(2+). Residues 355-433 form the OCT domain; the sequence is KFEEQKEDIQ…VFDYELEWTD (79 aa).

The protein belongs to the TRAFAC class OBG-HflX-like GTPase superfamily. OBG GTPase family. As to quaternary structure, monomer. Mg(2+) is required as a cofactor.

Its subcellular location is the cytoplasm. An essential GTPase which binds GTP, GDP and possibly (p)ppGpp with moderate affinity, with high nucleotide exchange rates and a fairly low GTP hydrolysis rate. Plays a role in control of the cell cycle, stress response, ribosome biogenesis and in those bacteria that undergo differentiation, in morphogenesis control. The chain is GTPase Obg from Mycoplasma mycoides subsp. mycoides SC (strain CCUG 32753 / NCTC 10114 / PG1).